A 645-amino-acid chain; its full sequence is Crossover junction endonuclease mus-81 (645 aa).

Disordered stretches follow at residues Leu-98–Arg-119 and Gly-219–Lys-310. Over residues Ser-223 to Asp-252 the composition is skewed to polar residues. The span at Asp-296–Asp-305 shows a compositional bias: acidic residues. Residues Glu-353–Asn-459 form the ERCC4 domain.

This sequence belongs to the XPF family. As to quaternary structure, interacts with eme-1. It depends on Mg(2+) as a cofactor.

It is found in the nucleus. In terms of biological role, interacts with eme-1 to form a DNA structure-specific endonuclease with substrate preference for branched DNA structures with a 5'-end at the branch nick. Typical substrates include 3'-flap structures, D-loops, replication forks and nicked Holliday junctions. May be required in mitosis for the processing of stalled or collapsed replication fork intermediates. May be required in meiosis for the repair of meiosis-specific double strand breaks subsequent to single-end invasion (SEI). The protein is Crossover junction endonuclease mus-81 (mus-81) of Neurospora crassa (strain ATCC 24698 / 74-OR23-1A / CBS 708.71 / DSM 1257 / FGSC 987).